The chain runs to 436 residues: Transcriptional regulator dmxR14 (436 aa).

The segment covering 1-27 has biased composition (polar residues); it reads MEEAETNTQVDSVPSNSVRSGAELSSK. The tract at residues 1-32 is disordered; that stretch reads MEEAETNTQVDSVPSNSVRSGAELSSKSKLRD. Positions 34-61 form a DNA-binding region, zn(2)-C6 fungal-type; sequence CHACARSKVRCPKQKPSCSRCEARGTTC. The tract at residues 67 to 136 is disordered; it reads RRPGRRRETS…ITTVHNGPEN (70 aa). Residues 90-136 are compositionally biased toward polar residues; sequence SHANNRNSPSFSSTRSTLPSPIASDSNSNFTQPQNSSITTVHNGPEN.

It is found in the nucleus. Functionally, transcriptional regulator; part of the gene cluster that mediates the biosynthesis of the dimeric xanthones cryptosporioptides. The chain is Transcriptional regulator dmxR14 from Cryptosporiopsis sp. (strain 8999).